A 144-amino-acid polypeptide reads, in one-letter code: Phospholipase A2 (144 aa).

The first 15 residues, 1–15 (MKFLVLAALLTAGTA), serve as a signal peptide directing secretion. Residues 16 to 22 (ASGVSPT) constitute a propeptide, activation peptide. 7 disulfide bridges follow: C33-C99, C49-C144, C51-C67, C66-C127, C73-C120, C83-C113, and C106-C118. Ca(2+) contacts are provided by Y50, G52, and G54. The active site involves H70. D71 is a binding site for Ca(2+). D121 is a catalytic residue.

This sequence belongs to the phospholipase A2 family. In terms of assembly, monomer or homodimer. Ca(2+) is required as a cofactor. Activated by trypsin cleavage in the duodenum. Can also be activated by thrombin or autocatalytically.

The protein localises to the secreted. The catalysed reaction is a 1,2-diacyl-sn-glycero-3-phosphocholine + H2O = a 1-acyl-sn-glycero-3-phosphocholine + a fatty acid + H(+). It catalyses the reaction 1,2-ditetradecanoyl-sn-glycero-3-phosphocholine + H2O = 1-tetradecanoyl-sn-glycero-3-phosphocholine + tetradecanoate + H(+). The enzyme catalyses 1,2-dihexadecanoyl-sn-glycero-3-phosphocholine + H2O = 1-hexadecanoyl-sn-glycero-3-phosphocholine + hexadecanoate + H(+). It carries out the reaction 1-hexadecanoyl-2-(9Z-octadecenoyl)-sn-glycero-3-phosphocholine + H2O = 1-hexadecanoyl-sn-glycero-3-phosphocholine + (9Z)-octadecenoate + H(+). The catalysed reaction is 1-hexadecanoyl-2-(5Z,8Z,11Z,14Z-eicosatetraenoyl)-sn-glycero-3-phosphocholine + H2O = 1-hexadecanoyl-sn-glycero-3-phosphocholine + (5Z,8Z,11Z,14Z)-eicosatetraenoate + H(+). It catalyses the reaction 1-hexadecanoyl-2-(9Z-octadecenoyl)-sn-glycero-3-phospho-(1'-sn-glycerol) + H2O = 1-hexadecanoyl-sn-glycero-3-phospho-(1'-sn-glycerol) + (9Z)-octadecenoate + H(+). The enzyme catalyses N-hexadecanoyl-1,2-di-(9Z-octadecenoyl)-sn-glycero-3-phosphoethanolamine + H2O = N-hexadecanoyl-1-(9Z-octadecenoyl)-sn-glycero-3-phosphoethanolamine + (9Z)-octadecenoate + H(+). It carries out the reaction 1-hexadecanoyl-2-(9Z,12Z-octadecadienoyl)-sn-glycero-3-phosphoethanolamine + H2O = 1-hexadecanoyl-sn-glycero-3-phosphoethanolamine + (9Z,12Z)-octadecadienoate + H(+). The catalysed reaction is N,1-dihexadecanoyl-2-(9Z,12Z-octadecadienoyl)-sn-glycero-3-phosphoethanolamine + H2O = N,1-dihexadecanoyl-sn-glycero-3-phosphoethanolamine + (9Z,12Z)-octadecadienoate + H(+). Its function is as follows. Secretory calcium-dependent phospholipase A2 that primarily targets dietary phospholipids in the intestinal tract. Hydrolyzes the ester bond of the fatty acyl group attached at sn-2 position of phospholipids (phospholipase A2 activity) with preference for phosphatidylethanolamines and phosphatidylglycerols over phosphatidylcholines. May play a role in the biosynthesis of N-acyl ethanolamines that regulate energy metabolism and inflammation in the intestinal tract. Hydrolyzes N-acyl phosphatidylethanolamines to N-acyl lysophosphatidylethanolamines, which are further cleaved by a lysophospholipase D to release N-acyl ethanolamines. May act in an autocrine and paracrine manner. Has anti-helminth activity in a process regulated by gut microbiota. Upon helminth infection of intestinal epithelia, directly affects phosphatidylethanolamine contents in the membrane of helminth larvae, likely controlling an array of phospholipid-mediated cellular processes such as membrane fusion and cell division while providing for better immune recognition, ultimately reducing larvae integrity and infectivity. The polypeptide is Phospholipase A2 (PLA2G1B) (Oryctolagus cuniculus (Rabbit)).